The primary structure comprises 177 residues: uncharacterized protein (177 aa).

In terms of domain architecture, Macro spans 1–175 (MYKNPYGLEI…VFKSIFNSIL (175 aa)).

This is an uncharacterized protein from Saccharolobus solfataricus (strain ATCC 35092 / DSM 1617 / JCM 11322 / P2) (Sulfolobus solfataricus).